The primary structure comprises 149 residues: Small ribosomal subunit protein uS13 (149 aa).

This sequence belongs to the universal ribosomal protein uS13 family. In terms of assembly, part of the 30S ribosomal subunit. Forms a loose heterodimer with protein S19. Forms two bridges to the 50S subunit in the 70S ribosome.

Functionally, located at the top of the head of the 30S subunit, it contacts several helices of the 16S rRNA. In the 70S ribosome it contacts the 23S rRNA (bridge B1a) and protein L5 of the 50S subunit (bridge B1b), connecting the 2 subunits; these bridges are implicated in subunit movement. The protein is Small ribosomal subunit protein uS13 of Thermococcus kodakarensis (strain ATCC BAA-918 / JCM 12380 / KOD1) (Pyrococcus kodakaraensis (strain KOD1)).